We begin with the raw amino-acid sequence, 185 residues long: Elongation factor P (185 aa).

The protein belongs to the elongation factor P family.

It is found in the cytoplasm. It functions in the pathway protein biosynthesis; polypeptide chain elongation. Involved in peptide bond synthesis. Stimulates efficient translation and peptide-bond synthesis on native or reconstituted 70S ribosomes in vitro. Probably functions indirectly by altering the affinity of the ribosome for aminoacyl-tRNA, thus increasing their reactivity as acceptors for peptidyl transferase. The sequence is that of Elongation factor P from Alkaliphilus oremlandii (strain OhILAs) (Clostridium oremlandii (strain OhILAs)).